A 470-amino-acid polypeptide reads, in one-letter code: Light-independent protochlorophyllide reductase subunit N (470 aa).

Positions 23, 48, and 108 each coordinate [4Fe-4S] cluster.

The protein belongs to the BchN/ChlN family. As to quaternary structure, protochlorophyllide reductase is composed of three subunits; ChlL, ChlN and ChlB. Forms a heterotetramer of two ChlB and two ChlN subunits. It depends on [4Fe-4S] cluster as a cofactor.

Its subcellular location is the plastid. The protein resides in the chloroplast. The catalysed reaction is chlorophyllide a + oxidized 2[4Fe-4S]-[ferredoxin] + 2 ADP + 2 phosphate = protochlorophyllide a + reduced 2[4Fe-4S]-[ferredoxin] + 2 ATP + 2 H2O. It functions in the pathway porphyrin-containing compound metabolism; chlorophyll biosynthesis (light-independent). Component of the dark-operative protochlorophyllide reductase (DPOR) that uses Mg-ATP and reduced ferredoxin to reduce ring D of protochlorophyllide (Pchlide) to form chlorophyllide a (Chlide). This reaction is light-independent. The NB-protein (ChlN-ChlB) is the catalytic component of the complex. This is Light-independent protochlorophyllide reductase subunit N from Zygnema circumcarinatum (Green alga).